We begin with the raw amino-acid sequence, 483 residues long: Probable 4-hydroxyphenylacetate 3-monooxygenase (483 aa).

Residues 104-108 (RSPDY) and histidine 150 contribute to the substrate site. Residues 150–152 (HTF), 156–159 (QVNR), and threonine 193 each bind FAD. A substrate-binding site is contributed by 206–207 (AP). FAD is bound at residue 452–455 (DPIR).

The protein belongs to the FADH(2)-utilizing monooxygenase family.

The catalysed reaction is 4-hydroxyphenylacetate + FADH2 + O2 = 3,4-dihydroxyphenylacetate + FAD + H2O + H(+). The protein operates within aromatic compound metabolism; 4-hydroxyphenylacetate degradation; pyruvate and succinate semialdehyde from 4-hydroxyphenylacetate: step 1/7. In terms of biological role, catalyzes the hydroxylation of 4-hydroxyphenylacetic acid (4HPA), leading to the production of 3,4-dihydroxyphenylacetic acid (DHPA). This is Probable 4-hydroxyphenylacetate 3-monooxygenase (yoaI) from Bacillus subtilis (strain 168).